The following is a 242-amino-acid chain: 1-(5-phosphoribosyl)-5-[(5-phosphoribosylamino)methylideneamino] imidazole-4-carboxamide isomerase (242 aa).

The active-site Proton acceptor is the aspartate 7. The Proton donor role is filled by aspartate 129.

This sequence belongs to the HisA/HisF family.

The protein resides in the cytoplasm. The enzyme catalyses 1-(5-phospho-beta-D-ribosyl)-5-[(5-phospho-beta-D-ribosylamino)methylideneamino]imidazole-4-carboxamide = 5-[(5-phospho-1-deoxy-D-ribulos-1-ylimino)methylamino]-1-(5-phospho-beta-D-ribosyl)imidazole-4-carboxamide. The protein operates within amino-acid biosynthesis; L-histidine biosynthesis; L-histidine from 5-phospho-alpha-D-ribose 1-diphosphate: step 4/9. This Pseudoalteromonas translucida (strain TAC 125) protein is 1-(5-phosphoribosyl)-5-[(5-phosphoribosylamino)methylideneamino] imidazole-4-carboxamide isomerase.